Here is a 438-residue protein sequence, read N- to C-terminus: Asparagine--tRNA ligase (438 aa).

The protein belongs to the class-II aminoacyl-tRNA synthetase family. In terms of assembly, homodimer.

It is found in the cytoplasm. The enzyme catalyses tRNA(Asn) + L-asparagine + ATP = L-asparaginyl-tRNA(Asn) + AMP + diphosphate + H(+). This chain is Asparagine--tRNA ligase, found in Thermus thermophilus (strain ATCC 27634 / DSM 579 / HB8).